Consider the following 462-residue polypeptide: L-seryl-tRNA(Sec) selenium transferase (462 aa).

Residue lysine 294 is modified to N6-(pyridoxal phosphate)lysine.

This sequence belongs to the SelA family. Homodecamer; pentamer of dimers. Binds only one seryl-tRNA(Sec) per dimer. Pyridoxal 5'-phosphate serves as cofactor.

It localises to the cytoplasm. The catalysed reaction is L-seryl-tRNA(Sec) + selenophosphate + H(+) = L-selenocysteinyl-tRNA(Sec) + phosphate. It functions in the pathway aminoacyl-tRNA biosynthesis; selenocysteinyl-tRNA(Sec) biosynthesis; selenocysteinyl-tRNA(Sec) from L-seryl-tRNA(Sec) (bacterial route): step 1/1. In terms of biological role, converts seryl-tRNA(Sec) to selenocysteinyl-tRNA(Sec) required for selenoprotein biosynthesis. The polypeptide is L-seryl-tRNA(Sec) selenium transferase (Yersinia pseudotuberculosis serotype O:1b (strain IP 31758)).